The following is a 321-amino-acid chain: Olfactory receptor 52N4 (321 aa).

The Extracellular segment spans residues 1–27; that stretch reads MLTLNKTDLIPASFILNGVPGLEDTQL. N-linked (GlcNAc...) asparagine glycosylation is present at Asn5. A helical membrane pass occupies residues 28–48; the sequence is WISFPFCSMYVVAMVGNCGLL. The Cytoplasmic portion of the chain corresponds to 49–56; it reads YLIHYEDA. Residues 57-77 form a helical membrane-spanning segment; that stretch reads LHKPMYYFLAMLSFTDLVMCS. Residues 78–101 are Extracellular-facing; sequence STIPKALCIFWFHLKDIGFDECLV. Cys99 and Cys191 form a disulfide bridge. A helical membrane pass occupies residues 102-122; that stretch reads QMFFTHTFTGMESGVLMLMAL. The Cytoplasmic segment spans residues 123–141; that stretch reads DRYVAICYPLRYSTILTNP. The helical transmembrane segment at 142–162 threads the bilayer; the sequence is VIAKVGTATFLRGVLLIIPFT. The Extracellular portion of the chain corresponds to 163–198; sequence FLTKLLPYCRGNILPHTYCDHMSVAKLSCGNVKVNA. The helical transmembrane segment at 199-219 threads the bilayer; it reads IYGLMVALLIWGFDILCITNS. Topologically, residues 220–239 are cytoplasmic; that stretch reads YTMILRAVVSLSSADARQKA. Residues 240–260 traverse the membrane as a helical segment; that stretch reads FNTCTAHICAIVFSYTPAFFS. Over 261–276 the chain is Extracellular; that stretch reads FFSHRFGEHIIPPSCH. Residues 277–297 form a helical membrane-spanning segment; the sequence is IIVANIYLLLPPTMNPIVYGV. Residues 298-321 are Cytoplasmic-facing; sequence KTKQIRDCVIRILSGSKDTKSYSM.

This sequence belongs to the G-protein coupled receptor 1 family.

It is found in the cell membrane. In terms of biological role, odorant receptor. In Homo sapiens (Human), this protein is Olfactory receptor 52N4 (OR52N4).